The sequence spans 771 residues: Polyribonucleotide nucleotidyltransferase (771 aa).

Residues aspartate 487 and aspartate 493 each contribute to the Mg(2+) site. The 60-residue stretch at 554–613 folds into the KH domain; that stretch reads PRIETMQIDKAKIRDVIGTGGKVIREIVATTGAKVDIDDEGLIKISSSDLDQIEAARKWI. The 69-residue stretch at 623-691 folds into the S1 motif domain; sequence GKIYDGKVVN…PRGKVRLSMR (69 aa). Residues 696–771 are disordered; it reads ETGAELEDTR…QGHVPDFLKD (76 aa). Residues 702-771 are compositionally biased toward basic and acidic residues; the sequence is EDTRPAREPR…QGHVPDFLKD (70 aa).

This sequence belongs to the polyribonucleotide nucleotidyltransferase family. It depends on Mg(2+) as a cofactor.

The protein resides in the cytoplasm. The catalysed reaction is RNA(n+1) + phosphate = RNA(n) + a ribonucleoside 5'-diphosphate. Involved in mRNA degradation. Catalyzes the phosphorolysis of single-stranded polyribonucleotides processively in the 3'- to 5'-direction. This Sphingopyxis alaskensis (strain DSM 13593 / LMG 18877 / RB2256) (Sphingomonas alaskensis) protein is Polyribonucleotide nucleotidyltransferase.